The chain runs to 28 residues: GCMPEYCAGQCRGKVSQDYCLKNCRCIR.

Cystine bridges form between Cys2/Cys24, Cys7/Cys20, and Cys11/Cys26.

Expressed by the venom gland.

Its subcellular location is the secreted. Functionally, blocks potassium channels Shaker-IR (with inactivation domain removed) and hKv1.2/KCNA2. The protein is Kappa-buthitoxin-Tt2b of Tityus trivittatus (Argentinean scorpion).